We begin with the raw amino-acid sequence, 150 residues long: MLAQFDVNLVVLLVLLICGLLSQNAAVTIAADVLIVIKITPLNQFFPYIQAHGLNLGILILTIGVLTPIASGKLSGESILKSFISFKSLVAIAIGLLVAWLGGRGVKLMSSQPDVVAGLLIGTVAGVALLRGVPVGPLIAAGLLSLFIGK.

Transmembrane regions (helical) follow at residues 1–21, 45–65, 83–103, and 115–135; these read MLAQFDVNLVVLLVLLICGLL, FFPYIQAHGLNLGILILTIGV, FISFKSLVAIAIGLLVAWLGG, and VVAGLLIGTVAGVALLRGVPV.

The protein belongs to the UPF0756 family.

Its subcellular location is the cell membrane. The polypeptide is UPF0756 membrane protein ABAYE1440 (Acinetobacter baumannii (strain AYE)).